The following is a 701-amino-acid chain: MTTSESPDAYTESFGAHTIVKPAGPPRVGQPSWNPQRASSMPVNRYRPFAEEVEPIRLRNRTWPDRVIDRAPLWCAVDLRDGNQALIDPMSPARKRRMFDLLVRMGYKEIEVGFPSASQTDFDFVREIIEQGAIPDDVTIQVLTQCRPELIERTFQACSGAHRAIVHFYNSTSILQRRVVFRANRAEVQAIATDGARKCVEQAAKYPGTQWRFEYSPESYTGTELEYAKQVCDAVGEVIAPTPERPIIFNLPATVEMTTPNVYADSIEWMSRNLANRESVILSLHPHNDRGTAVAAAELGFAAGADRIEGCLFGNGERTGNVCLVTLGLNLFSRGVDPQIDFSNIDEIRRTVEYCNQLPVHERHPYGGDLVYTAFSGSHQDAINKGLDAMKLDADAADCDVDDMLWQVPYLPIDPRDVGRTYEAVIRVNSQSGKGGVAYIMKTDHGLSLPRRLQIEFSQVIQKIAEGTAGEGGEVSPKEMWDAFAEEYLAPVRPLERIRQHVDAADDDGGTTSITATVKINGVETEISGSGNGPLAAFVHALADVGFDVAVLDYYEHAMSAGDDAQAAAYVEASVTIASPAQPGEAGRHASDPVTIASPAQPGEAGRHASDPVTIASPAQPGEAGRHASDPVTIASPAQPGEAGRHASDPVTIASPAQPGEAGRHASDPVTSKTVWGVGIAPSITTASLRAVVSAVNRAAR.

Positions 1 to 40 are disordered; that stretch reads MTTSESPDAYTESFGAHTIVKPAGPPRVGQPSWNPQRASS. Over residues 31–40 the composition is skewed to polar residues; the sequence is PSWNPQRASS. Residues 72–346 form the Pyruvate carboxyltransferase domain; it reads PLWCAVDLRD…DPQIDFSNID (275 aa). The Mg(2+) site is built by aspartate 81, histidine 285, histidine 287, and asparagine 321. Positions 491-701 are regulatory domain; the sequence is PVRPLERIRQ…VVSAVNRAAR (211 aa). A VNTR1 repeat occupies 575–593; sequence VTIASPAQPGEAGRHASDP. Positions 581 to 670 are disordered; sequence AQPGEAGRHA…EAGRHASDPV (90 aa). One copy of the VNTR2 repeat lies at 594–612; the sequence is VTIASPAQPGEAGRHASDP. The VNTR3 repeat unit spans residues 613–631; that stretch reads VTIASPAQPGEAGRHASDP. One copy of the VNTR4 repeat lies at 632–650; that stretch reads VTIASPAQPGEAGRHASDP. Residues 651–669 form a VNTR5 repeat; the sequence is VTIASPAQPGEAGRHASDP.

Belongs to the alpha-IPM synthase/homocitrate synthase family. LeuA type 2 subfamily. In terms of assembly, homodimer. Requires Mg(2+) as cofactor.

The protein resides in the cytoplasm. It catalyses the reaction 3-methyl-2-oxobutanoate + acetyl-CoA + H2O = (2S)-2-isopropylmalate + CoA + H(+). It functions in the pathway amino-acid biosynthesis; L-leucine biosynthesis; L-leucine from 3-methyl-2-oxobutanoate: step 1/4. Functionally, catalyzes the condensation of the acetyl group of acetyl-CoA with 3-methyl-2-oxobutanoate (2-ketoisovalerate) to form 3-carboxy-3-hydroxy-4-methylpentanoate (2-isopropylmalate). This Mycobacterium bovis (strain ATCC BAA-935 / AF2122/97) protein is 2-isopropylmalate synthase.